Reading from the N-terminus, the 662-residue chain is MSTSNAQSGRAAAIARRNAQVKGKGYTASAAPAAPRKPAAPVAEPVVAAAPAPSQPSRSRRKVSVAPTATPAASAAGREAAKLKRQQQKNGKSSAGAANAMPHPKAKAKQKPEEPIVEPRQAKAEKPTKRSERRTGVKPQVASQQPSGRLQSKAYRKAQAKGKAGQEAFKSNGSSQSGAKAKLANPDASTREIAQQVRAERCAQGKTCSTGGSRPMRKRRNAKEAPQKVGESQTLHGQSVSGTQVGQGEKKMTGSESGACQLVSGTEYLGAEEFSKNCDVQPTPQPAKVTQTQTTRGQVVSGSTKVGRSDKMTGNETGTCSAITGTEYLPADQSKMYCGETPAKSKATGFSVMSQATQKSEQKVTGGDSRKSQSTTFKPKNPASAPHKVMPSQTAKGNTTTGSQVGRLESVTGGERGSCHAVTGTGYQGAEEAKACDMPMTETADKVTASGTAGGQKVTGDRSGAYYGMTGAEAGDCKTITGTSYTGTEQFQFCSVDEQNEMKVRQRKGANPSISGVQPGPQGLTGAQKGACELVTGSHYQGGDQTAMVCDSTNAAAPGESDFPAMIGQAQPAFSTNEVEPMVDEGSKITGDGWDRGSKVTGTDGPWAAQRNASIRGVAGQSPMGASQYRPVNNEVPMSPITGSSGNTDTGAKVTLSGGARA.

The interval 1–227 (MSTSNAQSGR…KRRNAKEAPQ (227 aa)) is N-terminal domain. 3 disordered regions span residues 1–258 (MSTS…SESG), 277–322 (NCDV…TCSA), and 342–419 (PAKS…RGSC). The stretch at 8-27 (SGRAAAIARRNAQVKGKGYT) is one N-repeat 1 repeat. Low complexity-rich tracts occupy residues 28 to 57 (ASAA…SQPS) and 64 to 76 (SVAP…ASAA). One copy of the N-repeat 2 repeat lies at 58 to 72 (RSRRKVSVAPTATPA). Positions 120-135 (RQAKAEKPTKRSERRT) are enriched in basic and acidic residues. Polar residues predominate over residues 141–150 (VASQQPSGRL). The N-repeat 3 repeat unit spans residues 147–168 (SGRLQSKAYRKAQAKGKAGQEA). Low complexity-rich tracts occupy residues 161–170 (KGKAGQEAFK), 237–247 (GQSVSGTQVGQ), and 289–300 (VTQTQTTRGQVV). M-repeat repeat units lie at residues 228 to 278 (KVGE…SKNC), 288 to 338 (KVTQ…KMYC), 388 to 436 (KVMP…AKAC), 446 to 491 (KVTA…TEQF), and 496 to 550 (VDEQ…AMVC). Positions 228 to 559 (KVGESQTLHG…CDSTNAAAPG (332 aa)) are middle region. The segment covering 391–404 (PSQTAKGNTTTGSQ) has biased composition (polar residues). Residues 560 to 631 (ESDFPAMIGQ…SPMGASQYRP (72 aa)) form a C-terminal domain region. The stretch at 564-572 (PAMIGQAQP) is one C-repeat 1 repeat. Disordered stretches follow at residues 588–607 (KITG…DGPW) and 619–662 (AGQS…GARA). Positions 632 to 662 (VNNEVPMSPITGSSGNTDTGAKVTLSGGARA) are C-terminal peptide. Over residues 641 to 650 (ITGSSGNTDT) the composition is skewed to polar residues.

It belongs to the CsoS2 family. In terms of assembly, interacts via its N-terminal repeats with RuBisCO. Interacts with the major shell protein CsoS1. Unlike H.neapolitanus and predictions for P.marinus strain MIT 9313, this protein is not thought to have ribosomal frameshifting.

The protein localises to the carboxysome. In terms of biological role, required for alpha-carboxysome (Cb) assembly, mediates interaction between RuBisCO and the Cb shell. The protein is probably intrinsically disordered. The C-terminal repeats act as the encapsulation signal to target proteins to the Cb; they are necessary and sufficient to target both CsoS2 and foreign proteins to the Cb. The N-terminal repeats of this protein bind simultaneously to both subunits of RuBisCO. Probably also interacts with the major shell proteins (CsoS1); that interaction would increase the local concentration of CsoS2 so that it can condense RuBisCO and full carboxysomes can be formed. This Hydrogenovibrio crunogenus (strain DSM 25203 / XCL-2) (Thiomicrospira crunogena) protein is Carboxysome assembly protein CsoS2.